The sequence spans 213 residues: Pyrrolidone-carboxylate peptidase (213 aa).

Catalysis depends on residues glutamate 81, cysteine 144, and histidine 166.

Belongs to the peptidase C15 family. Homodimer.

The protein localises to the cytoplasm. The enzyme catalyses Release of an N-terminal pyroglutamyl group from a polypeptide, the second amino acid generally not being Pro.. Removes 5-oxoproline from various penultimate amino acid residues except L-proline. This Pseudomonas fluorescens protein is Pyrrolidone-carboxylate peptidase (pcp).